Consider the following 158-residue polypeptide: Transcription antitermination protein NusB (158 aa).

The segment covering 1 to 13 has biased composition (polar residues); that stretch reads MSEAGDTSPQPGK. The segment at 1–24 is disordered; it reads MSEAGDTSPQPGKTGQPKAGDRRR.

It belongs to the NusB family.

Functionally, involved in transcription antitermination. Required for transcription of ribosomal RNA (rRNA) genes. Binds specifically to the boxA antiterminator sequence of the ribosomal RNA (rrn) operons. In Marinobacter nauticus (strain ATCC 700491 / DSM 11845 / VT8) (Marinobacter aquaeolei), this protein is Transcription antitermination protein NusB.